The following is a 329-amino-acid chain: DNA-directed RNA polymerase subunit alpha (329 aa).

An alpha N-terminal domain (alpha-NTD) region spans residues 1-235; it reads MQGSVTEFLK…EQLEAFVDLR (235 aa). An alpha C-terminal domain (alpha-CTD) region spans residues 249-329; it reads FDPILLRPVD…NWPPASIADE (81 aa).

Belongs to the RNA polymerase alpha chain family. As to quaternary structure, homodimer. The RNAP catalytic core consists of 2 alpha, 1 beta, 1 beta' and 1 omega subunit. When a sigma factor is associated with the core the holoenzyme is formed, which can initiate transcription.

It carries out the reaction RNA(n) + a ribonucleoside 5'-triphosphate = RNA(n+1) + diphosphate. DNA-dependent RNA polymerase catalyzes the transcription of DNA into RNA using the four ribonucleoside triphosphates as substrates. In Enterobacter sp. (strain 638), this protein is DNA-directed RNA polymerase subunit alpha.